Consider the following 103-residue polypeptide: Urease subunit beta (103 aa).

This sequence belongs to the urease beta subunit family. Heterotrimer of UreA (gamma), UreB (beta) and UreC (alpha) subunits. Three heterotrimers associate to form the active enzyme.

It localises to the cytoplasm. It carries out the reaction urea + 2 H2O + H(+) = hydrogencarbonate + 2 NH4(+). Its pathway is nitrogen metabolism; urea degradation; CO(2) and NH(3) from urea (urease route): step 1/1. In Streptomyces avermitilis (strain ATCC 31267 / DSM 46492 / JCM 5070 / NBRC 14893 / NCIMB 12804 / NRRL 8165 / MA-4680), this protein is Urease subunit beta.